A 651-amino-acid chain; its full sequence is Sodium/potassium/calcium exchanger 2 (651 aa).

Residues 1 to 38 (MALCKKTVGSVLEEWCLNEPLFGCKRHQNVRKKLRLIR) lie on the Cytoplasmic side of the membrane. A helical membrane pass occupies residues 39-59 (IIGLLVSVVAISTFSLSISAF). The Extracellular segment spans residues 60 to 134 (FKMETHSTVL…DLFSLEERRK (75 aa)). The disordered stretch occupies residues 92–123 (QNEGSTPDSPTSMKHEAEHDNATEEHSKGEYP). Over residues 93–103 (NEGSTPDSPTS) the composition is skewed to polar residues. A compositionally biased stretch (basic and acidic residues) spans 104–122 (MKHEAEHDNATEEHSKGEY). An N-linked (GlcNAc...) asparagine glycan is attached at Asn112. Residues 135 to 155 (GAVILHVIGMIYMFIALAIVC) form a helical membrane-spanning segment. Residues 156 to 179 (DEFFVPSLTVITEKLSISDDVAGA) lie on the Cytoplasmic side of the membrane. One copy of the Alpha-1 repeat lies at 176–216 (VAGATFMAAGGSAPELFTSLIGVFISHSNVGIGTIVGSAVF). Residues 180-200 (TFMAAGGSAPELFTSLIGVFI) form a helical membrane-spanning segment. Topologically, residues 201–206 (SHSNVG) are extracellular. A helical transmembrane segment spans residues 207–227 (IGTIVGSAVFNILFVIGMCAL). At 228–245 (FSREILNLTWWPLFRDVS) the chain is on the cytoplasmic side. The helical transmembrane segment at 246–266 (FYIVDLILLIIFFLDNLIMWW) threads the bilayer. Residues 267-459 (ESLTLLTAYF…SLAWPDTPRK (193 aa)) are Extracellular-facing. Residues 304 to 322 (ATTGDAEGKSPTAGDKDDQ) show a composition bias toward basic and acidic residues. The disordered stretch occupies residues 304 to 338 (ATTGDAEGKSPTAGDKDDQTLTTKPRLQRGGSSAS). Over residues 323 to 338 (TLTTKPRLQRGGSSAS) the composition is skewed to polar residues. The chain crosses the membrane as a helical span at residues 460 to 480 (QLTYLLVLPIVFPLWVSLPDV). Over 481-487 (RNPRSRK) the chain is Cytoplasmic. A helical transmembrane segment spans residues 488–508 (FFPITFFGSISWIAFFSYLMV). The Extracellular portion of the chain corresponds to 509-523 (WWAHQVGETIGISEE). Residues 524-544 (IMGLTILAAGTSIPDLITSVI) form a helical membrane-spanning segment. Residues 531–562 (AAGTSIPDLITSVIVARKGLGDMAVSSSVGSN) form an Alpha-2 repeat. At 545–562 (VARKGLGDMAVSSSVGSN) the chain is on the cytoplasmic side. Residues 563 to 583 (IFDITVGLPLPWLLYAVINNF) form a helical membrane-spanning segment. The Extracellular segment spans residues 584-592 (SPVTVSSNG). Residues 593 to 613 (LFCAIVLLFIMLLFVILSIAF) form a helical membrane-spanning segment. Residues 614-620 (CKWRMNK) are Cytoplasmic-facing. A helical transmembrane segment spans residues 621–641 (FLGFLMFGLYFVFLIVSVLLE). The Extracellular portion of the chain corresponds to 642–651 (DKVIQCPVSI).

Belongs to the Ca(2+):cation antiporter (CaCA) (TC 2.A.19) family. SLC24A subfamily. Retinal cones. Found in the cone inner segment layer and in a subpopulation of ganglion cells.

It localises to the cell membrane. The enzyme catalyses Ca(2+)(out) + K(+)(out) + 4 Na(+)(in) = Ca(2+)(in) + K(+)(in) + 4 Na(+)(out). Its function is as follows. Calcium, potassium:sodium antiporter that transports 1 Ca(2+) and 1 K(+) in exchange for 4 Na(+). Required for learming and memory by regulating neuronal Ca(2+), which is essential for the development of synaptic plasticity. This chain is Sodium/potassium/calcium exchanger 2 (SLC24A2), found in Gallus gallus (Chicken).